Here is a 178-residue protein sequence, read N- to C-terminus: Translation initiation factor IF-3 (178 aa).

It belongs to the IF-3 family. Monomer.

Its subcellular location is the cytoplasm. IF-3 binds to the 30S ribosomal subunit and shifts the equilibrium between 70S ribosomes and their 50S and 30S subunits in favor of the free subunits, thus enhancing the availability of 30S subunits on which protein synthesis initiation begins. This Picosynechococcus sp. (strain ATCC 27264 / PCC 7002 / PR-6) (Agmenellum quadruplicatum) protein is Translation initiation factor IF-3.